We begin with the raw amino-acid sequence, 76 residues long: DNA-directed RNA polymerase subunit epsilon (76 aa).

It belongs to the RNA polymerase subunit epsilon family. RNAP is composed of a core of 2 alpha, a beta and a beta' subunit. The core is associated with a delta subunit, and at least one of epsilon or omega. When a sigma factor is associated with the core the holoenzyme is formed, which can initiate transcription.

The enzyme catalyses RNA(n) + a ribonucleoside 5'-triphosphate = RNA(n+1) + diphosphate. Its function is as follows. A non-essential component of RNA polymerase (RNAP). This Streptococcus mutans serotype c (strain ATCC 700610 / UA159) protein is DNA-directed RNA polymerase subunit epsilon.